A 353-amino-acid chain; its full sequence is WAT1-related protein At3g28100 (353 aa).

10 consecutive transmembrane segments (helical) span residues 12 to 32 (AVFL…STLF), 43 to 63 (YAFL…SLFF), 81 to 101 (IGLL…GIEY), 105 to 125 (TLAS…AIIF), 137 to 157 (SVAK…VVLY), 187 to 207 (WLIG…SFIL), 219 to 239 (FTVS…IGLV), 252 to 272 (FDIT…YYVI), 283 to 303 (LYLA…SAVF), and 308 to 328 (LYLG…AVMW). The 129-residue stretch at 27–155 (GISTLFKVAT…LSLIGALVVV (129 aa)) folds into the EamA domain.

The protein belongs to the drug/metabolite transporter (DMT) superfamily. Plant drug/metabolite exporter (P-DME) (TC 2.A.7.4) family.

It is found in the membrane. The sequence is that of WAT1-related protein At3g28100 from Arabidopsis thaliana (Mouse-ear cress).